A 52-amino-acid polypeptide reads, in one-letter code: Insulin (52 aa).

3 disulfides stabilise this stretch: Cys-7-Cys-38, Cys-19-Cys-51, and Cys-37-Cys-42.

Belongs to the insulin family. Heterodimer of a B chain and an A chain linked by two disulfide bonds.

It localises to the secreted. Its function is as follows. Insulin decreases blood glucose concentration. It increases cell permeability to monosaccharides, amino acids and fatty acids. It accelerates glycolysis, the pentose phosphate cycle, and glycogen synthesis in liver. In Polypterus senegalus (Senegal bichir), this protein is Insulin (ins).